Here is a 463-residue protein sequence, read N- to C-terminus: Chromosomal replication initiator protein DnaA (463 aa).

A domain I, interacts with DnaA modulators region spans residues Met1–Val83. The tract at residues Val83–Ser126 is domain II. Residues Asn127–Ala343 are domain III, AAA+ region. ATP is bound by residues Gly171, Gly173, Lys174, and Thr175. Residues Asn344–Ser463 are domain IV, binds dsDNA.

This sequence belongs to the DnaA family. In terms of assembly, oligomerizes as a right-handed, spiral filament on DNA at oriC.

The protein localises to the cytoplasm. Functionally, plays an essential role in the initiation and regulation of chromosomal replication. ATP-DnaA binds to the origin of replication (oriC) to initiate formation of the DNA replication initiation complex once per cell cycle. Binds the DnaA box (a 9 base pair repeat at the origin) and separates the double-stranded (ds)DNA. Forms a right-handed helical filament on oriC DNA; dsDNA binds to the exterior of the filament while single-stranded (ss)DNA is stabiized in the filament's interior. The ATP-DnaA-oriC complex binds and stabilizes one strand of the AT-rich DNA unwinding element (DUE), permitting loading of DNA polymerase. After initiation quickly degrades to an ADP-DnaA complex that is not apt for DNA replication. Binds acidic phospholipids. This chain is Chromosomal replication initiator protein DnaA, found in Erwinia tasmaniensis (strain DSM 17950 / CFBP 7177 / CIP 109463 / NCPPB 4357 / Et1/99).